Consider the following 917-residue polypeptide: Glutamate receptor (917 aa).

The N-terminal stretch at 1-19 (MDTCVFPLVVLWISMRITS) is a signal peptide. The Extracellular segment spans residues 20-556 (TLDEVPIGGI…HFFSFMEPLS (537 aa)). N-linked (GlcNAc...) asparagine glycosylation is found at asparagine 62, asparagine 95, asparagine 121, asparagine 125, asparagine 229, asparagine 251, asparagine 261, asparagine 272, asparagine 418, asparagine 419, asparagine 424, and asparagine 491. A helical transmembrane segment spans residues 557 to 577 (SEIWMCIVFAYIGVSVVLFLV). The Cytoplasmic portion of the chain corresponds to 578–631 (SRFSPNEWHLSEAHHSYIANDFSISNSLWFSLGAFMQQGCDISPRSMSGRIVGS). Residues 632–652 (VWWFFTLIIISSYTANLAAFL) traverse the membrane as a helical segment. The Extracellular segment spans residues 653–818 (TVERMLTPID…GAQSALTLAN (166 aa)). N-linked (GlcNAc...) asparagine glycosylation is present at asparagine 775. The chain crosses the membrane as a helical span at residues 819 to 839 (VAGIFYILIGGLVVAVLSAAF). At 840–917 (EFLYKSRMDS…FEDSNTHTEV (78 aa)) the chain is on the cytoplasmic side. The tract at residues 871-896 (HIDSEQKTTGNGTRRRSHNSVTYTYT) is disordered.

Belongs to the glutamate-gated ion channel (TC 1.A.10.1) family.

Its subcellular location is the cell membrane. The protein localises to the postsynaptic cell membrane. In terms of biological role, receptor for glutamate. L-glutamate acts as an excitatory neurotransmitter at many synapses in the central nervous system. The postsynaptic actions of Glu are mediated by a variety of receptors. The sequence is that of Glutamate receptor from Lymnaea stagnalis (Great pond snail).